A 1338-amino-acid chain; its full sequence is Terpene cyclase-glycosyl transferase fusion protein fsoA (1338 aa).

The interval 1–687 is terpenne cyclase; sequence MDMAPDELDE…RFLDRTDEPD (687 aa). PFTB repeat units follow at residues 19 to 61, 69 to 111, and 267 to 307; these read LEQA…PALN, AAAL…RLLG, and LRRC…SLEH. Residue Asp-412 is the Proton donor of the active site. 3 PFTB repeats span residues 434–475, 515–556, and 564–615; these read VEMG…DSLV, AQKA…AFCG, and ALRA…LRFR. The interval 688–1338 is glycosyltransferase; the sequence is QDRDLPLLMT…NMLLGEGCQG (651 aa).

The protein in the N-terminal section; belongs to the terpene cyclase/mutase family. In the C-terminal section; belongs to the glycosyltransferase 28 family.

It catalyses the reaction (S)-2,3-epoxysqualene = isomotiol. It carries out the reaction isomotiol + UDP-alpha-D-glucose = 3-O-(beta-D-glucopyranosyl)-isomotiol + UDP + H(+). The enzyme catalyses 2alpha-hydroxyisomotiol + UDP-alpha-D-glucose = 3-O-(beta-D-glucopyranosyl)-2alpha-hydroxyisomotiol + UDP + H(+). It participates in secondary metabolite biosynthesis; terpenoid biosynthesis. Its function is as follows. Terpene cyclase-glycosyl transferase fusion protein; part of the gene cluster that mediates the biosynthesis of the enfumafungin-type antibiotic, fuscoatroside. Within the pathway, fsoA plays two important roles, the cyclization of 2,3(S)-oxidosqualene into isomotiol via its terpene cyclase (TC) domain and the C3 glycosylation of several intermediates via its glycosyltransferase (GT) domain. The fuscoatroside biosynthesis is initiated by the cyclization of 2,3(S)-oxidosqualene through FsoA's TC domain, leading to the formation of the fernane skeleton isomotiol, harboring a fernane triterpene skeleton with a C8-C9 double bond. Subsequently, C2-alpha-hydroxylation mediated by fsoD results in the production of 2-alpha-hydroxy-isomotiol, which is further acetylated by fsoF. The GT domain of FsoA may convert isomotiol, 2-alpha-hydroxy-isomotiol, and the acetylated derivative of 2-alpha-hydroxy-isomotiol into their corresponding glycosides 3-O-(beta-D-glucopyranosyl)-isomotiol, 3-O-(beta-D-glucopyranosyl)-2-alpha-hydroxy-isomotiol, and 3-O-(beta-D-glucopyranosyl)-2-alpha-acetoxy-isomotiol, which then undergo oxidative cleavage under the action of fsoE to form s 2-deacetoxy-fuscoatroside, 2-deacetyl-fuscoatroside, and fuscoatroside, respectively. Although hydroxylation followed by acetylation of 3-O-(beta-D-glucopyranosyl)-isomotiol and 2-deacetoxy-fuscoatroside by fsoD and fsoF could not be ruled out, this process is likely to occur with difficulty due to bulky steric hindrance caused by the presence of a glycan at C3 in these compounds. Interestingly, fsoE can also utilize the aglycones isomotiol and 2-alpha-hydroxy-isomotiol as substrates to generate 19-beta-hydroxy-isomotiol and 2-alpha,19-beta-dihydroxy-isomotiol, respectively. These reactions occur with lower efficiency. Finally, fsoE can further convert 2-alpha,19-beta-dihydroxy-isomotiol into 2-alpha-hydroxy-ismotiol-19-one and 2-alpha-hydroxy-ismotiol-19-one into 2-deacetyl-3-deglucopyranosyl-fuscoatroside. The sequence is that of Terpene cyclase-glycosyl transferase fusion protein fsoA from Humicola fuscoatra.